Consider the following 531-residue polypeptide: RNA-binding protein RO60 (531 aa).

Residues 24-360 (VRNNAGGFVY…AFGNVQPANT (337 aa)) enclose the TROVE domain. Positions 128–274 (RTGTMLLHFL…TNGLTWLLRN (147 aa)) are RNA-binding. The segment at 352–531 (FGNVQPANTR…VMTAFARGEV (180 aa)) is VWFA-like domain. A divalent metal cation is bound by residues Ser369, Ser371, and Thr438.

The protein belongs to the Ro 60 kDa family. In terms of assembly, forms oligomers upon binding DrY RNA, The multimers are of an average size of 700 kDa and are composed of around 12 molecules of Rsr-DrY RNA.

The protein resides in the cytoplasm. Its function is as follows. Binds to several small RNAs that accumulate during recovery from UV irradiation. Contributes to the resistance of D.radiodurans to ultraviolet irradiation. This Deinococcus radiodurans (strain ATCC 13939 / DSM 20539 / JCM 16871 / CCUG 27074 / LMG 4051 / NBRC 15346 / NCIMB 9279 / VKM B-1422 / R1) protein is RNA-binding protein RO60.